Consider the following 435-residue polypeptide: tRNA modification GTPase MnmE (435 aa).

Residues Arg-24, Glu-85, and Arg-124 each contribute to the (6S)-5-formyl-5,6,7,8-tetrahydrofolate site. Positions 220–361 (GLVFTIVGAP…LRTALAERAR (142 aa)) constitute a TrmE-type G domain. Asn-230 serves as a coordination point for K(+). Residues 230–235 (NVGKSS), 249–255 (SAIAGTT), and 274–277 (DTAG) each bind GTP. Position 234 (Ser-234) interacts with Mg(2+). 3 residues coordinate K(+): Ser-249, Ile-251, and Thr-254. A Mg(2+)-binding site is contributed by Thr-255. Lys-435 contributes to the (6S)-5-formyl-5,6,7,8-tetrahydrofolate binding site.

This sequence belongs to the TRAFAC class TrmE-Era-EngA-EngB-Septin-like GTPase superfamily. TrmE GTPase family. Homodimer. Heterotetramer of two MnmE and two MnmG subunits. It depends on K(+) as a cofactor.

The protein resides in the cytoplasm. In terms of biological role, exhibits a very high intrinsic GTPase hydrolysis rate. Involved in the addition of a carboxymethylaminomethyl (cmnm) group at the wobble position (U34) of certain tRNAs, forming tRNA-cmnm(5)s(2)U34. This chain is tRNA modification GTPase MnmE, found in Gluconacetobacter diazotrophicus (strain ATCC 49037 / DSM 5601 / CCUG 37298 / CIP 103539 / LMG 7603 / PAl5).